Consider the following 178-residue polypeptide: Alkyl hydroperoxide reductase AhpD (178 aa).

C131 functions as the Proton donor in the catalytic mechanism. A disulfide bridge connects residues C131 and C134. The active-site Cysteine sulfenic acid (-SOH) intermediate is C134.

This sequence belongs to the AhpD family. Homotrimer.

The catalysed reaction is N(6)-[(R)-dihydrolipoyl]-L-lysyl-[lipoyl-carrier protein] + a hydroperoxide = N(6)-[(R)-lipoyl]-L-lysyl-[lipoyl-carrier protein] + an alcohol + H2O. Its function is as follows. Antioxidant protein with alkyl hydroperoxidase activity. Required for the reduction of the AhpC active site cysteine residues and for the regeneration of the AhpC enzyme activity. The sequence is that of Alkyl hydroperoxide reductase AhpD from Streptomyces coelicolor (strain ATCC BAA-471 / A3(2) / M145).